A 244-amino-acid chain; its full sequence is Salivary antigen-5 (244 aa).

The first 23 residues, 1 to 23, serve as a signal peptide directing secretion; sequence MAKAHSSLVFCLLALALVRFAQA. Positions 46–202 constitute an SCP domain; sequence LDFHNKFREL…WYTGYLVCNY (157 aa). N-linked (GlcNAc...) asparagine glycans are attached at residues asparagine 106 and asparagine 172.

This sequence belongs to the CRISP family. Venom allergen 5-like subfamily. In terms of tissue distribution, salivary gland (at protein level).

It is found in the secreted. Inhibits host platelet aggregation induced by low doses of collagen. The chain is Salivary antigen-5 from Triatoma infestans (Assassin bug).